The primary structure comprises 690 residues: Long-chain fatty acid transport protein 5 (690 aa).

Residues 1–30 are Cytoplasmic-facing; it reads MGVRQQLALLLLLLLLLWGLGQPVWPVAVA. The next 2 helical transmembrane spans lie at 31–51 and 56–76; these read LTLR…LAML and LGPW…LTLL. The Cytoplasmic segment spans residues 77–690; the sequence is PARLPPGLRW…QAVCEGTWRL (614 aa). An AMP-binding site is contributed by 292-303; that stretch reads FIYTSGTTGLPK. S501 bears the Phosphoserine mark.

It belongs to the ATP-dependent AMP-binding enzyme family. Predominantly expressed in liver.

The protein localises to the endoplasmic reticulum membrane. It is found in the microsome. It localises to the cell membrane. It catalyses the reaction a fatty acid(in) = a fatty acid(out). The catalysed reaction is cholate + ATP + CoA = choloyl-CoA + AMP + diphosphate. The enzyme catalyses chenodeoxycholate + ATP + CoA = chenodeoxycholoyl-CoA + AMP + diphosphate. It carries out the reaction deoxycholate + ATP + CoA = deoxycholoyl-CoA + AMP + diphosphate. It catalyses the reaction lithocholate + ATP + CoA = lithocholoyl-CoA + AMP + diphosphate. The catalysed reaction is (25R)-3alpha,7alpha,12alpha-trihydroxy-5beta-cholestan-26-oate + ATP + CoA = (25R)-3alpha,7alpha,12alpha-trihydroxy-5beta-cholestan-26-oyl-CoA + AMP + diphosphate. The enzyme catalyses a very long-chain fatty acid + ATP + CoA = a very long-chain fatty acyl-CoA + AMP + diphosphate. It carries out the reaction tetracosanoate + ATP + CoA = tetracosanoyl-CoA + AMP + diphosphate. It catalyses the reaction hexacosanoate + ATP + CoA = hexacosanoyl-CoA + AMP + diphosphate. The catalysed reaction is a long-chain fatty acid + ATP + CoA = a long-chain fatty acyl-CoA + AMP + diphosphate. The enzyme catalyses octadecanoate + ATP + CoA = octadecanoyl-CoA + AMP + diphosphate. It carries out the reaction eicosanoate + ATP + CoA = eicosanoyl-CoA + AMP + diphosphate. 3-alpha,7-alpha,12-alpha-trihydroxy-5-beta-cholestanate (THCA) inhibits the activation of cholate. May mediate the import of long-chain fatty acids (LCFA) by facilitating their transport across cell membranes. Also catalyzes the ATP-dependent formation of fatty acyl-CoA using LCFA and very-long-chain fatty acids (VLCFA) as substrates. Mainly functions as a bile acyl-CoA synthetase catalyzing the activation of bile acids via ATP-dependent formation of bile acid CoA thioesters which is necessary for their subsequent conjugation with glycine or taurine. Both primary bile acids (cholic acid and chenodeoxycholic acid) and secondary bile acids (deoxycholic acid and lithocholic acid) are the principal substrates. In vitro, activates 3-alpha,7-alpha,12-alpha-trihydroxy-5-beta-cholestanate ((25R)-3alpha,7alpha,12alpha-trihydroxy-5beta-cholestan-26-oate or THCA), the C27 precursor of cholic acid deriving from the de novo synthesis from cholesterol. Plays an important role in hepatic fatty acid uptake and bile acid reconjugation and recycling but not in de novo synthesis of bile acids. This chain is Long-chain fatty acid transport protein 5 (SLC27A5), found in Homo sapiens (Human).